A 519-amino-acid chain; its full sequence is MKIEELQGYLEKDGSRQRHFLFLYPLLFQEYIYTLAHDHGLNGSIFVEILDYDNKSSSVLVKHLITRMYQQNYLIYSADDSNQNRIVGHNNFFYSKMISEGFAVSMEIPFLLRLGSSLEEKEIPKSQNLRSIHSIFPFLEDKSSHLNYVSDILIPHPIHLEILVQILQCWTQDVSSLHLLRFFLHEYHNSNSFITPKKPVYVISISKENKRFFRFLYNSYVFECEFLLVFFHKQSSYLRSRSSGVFLERTHFYEKMGNFLVVCCNYFQKTQWFFKDPFLHYVRYQGKAILVSKGTHLLMRKWRSYLVHFWQYYFQFWSHPHRIHINQLSNYSFCFLGYLSNLLINLSVVRSQMLENSFVIDILTKKFDTRVSVIALIRSLSKAKFCTVSGHPISKSIWTNLSDLDIIHRFGWICRNLSHYHSGSSKKQSLYRIKYILRISCARTLARKHKSKVRAFLQRLGSGLLQEFFREEEEILSLIFPQALFRSHTGRIWYLDIICINDLRNLMIDHKIKPYNECK.

It belongs to the intron maturase 2 family. MatK subfamily.

It localises to the plastid. The protein resides in the chloroplast. Its function is as follows. Usually encoded in the trnK tRNA gene intron. Probably assists in splicing its own and other chloroplast group II introns. The sequence is that of Maturase K from Dioscorea elephantipes (Elephant's foot yam).